The primary structure comprises 247 residues: UPF0280 protein MmarC5_0355 (247 aa).

Belongs to the UPF0280 family.

This Methanococcus maripaludis (strain C5 / ATCC BAA-1333) protein is UPF0280 protein MmarC5_0355.